A 370-amino-acid polypeptide reads, in one-letter code: Peptide chain release factor 2 (370 aa).

Glutamine 249 carries the N5-methylglutamine modification.

It belongs to the prokaryotic/mitochondrial release factor family. Post-translationally, methylated by PrmC. Methylation increases the termination efficiency of RF2.

The protein localises to the cytoplasm. Functionally, peptide chain release factor 2 directs the termination of translation in response to the peptide chain termination codons UGA and UAA. This Kosmotoga olearia (strain ATCC BAA-1733 / DSM 21960 / TBF 19.5.1) protein is Peptide chain release factor 2.